Here is a 268-residue protein sequence, read N- to C-terminus: Tryptophan synthase alpha chain (268 aa).

Active-site proton acceptor residues include Glu49 and Asp60.

It belongs to the TrpA family. As to quaternary structure, tetramer of two alpha and two beta chains.

It carries out the reaction (1S,2R)-1-C-(indol-3-yl)glycerol 3-phosphate + L-serine = D-glyceraldehyde 3-phosphate + L-tryptophan + H2O. The protein operates within amino-acid biosynthesis; L-tryptophan biosynthesis; L-tryptophan from chorismate: step 5/5. In terms of biological role, the alpha subunit is responsible for the aldol cleavage of indoleglycerol phosphate to indole and glyceraldehyde 3-phosphate. This chain is Tryptophan synthase alpha chain, found in Salmonella paratyphi A (strain ATCC 9150 / SARB42).